Here is a 336-residue protein sequence, read N- to C-terminus: MKRIAVLTSGGDAPGMNAAIRAVVRQAISEGMEVYGINEGYAGMVAGDIHELSARSVGDIISRGGTFLCSARYPEFAKLEGQLKGIEQLKKHGIEGVVVIGGDGSYHGAMRLTEHGFPAIGVPGTIDNDIVGTDFTIGFDTAVTTAMDAIDKIRDTSSSHRRTFVVEVMGRHAGDIALWAGIASGADVIVVPEEDFNINDVVDRIKAGYDKGKKHSIIVLAEGVMPAAQFAEELKAAGDTSDLRVTELGHIQRGGSPTARDRVLASRMGAHAVKLLKEGRGGLAVGIRNEQMVENPILGTAEEGALFSLTTDGKIVVNNPHKADLELADLNRNLSI.

Gly11 is a binding site for ATP. Arg21–Arg25 contacts ADP. ATP is bound by residues Arg72–Tyr73 and Gly102–Ser105. Asp103 contributes to the Mg(2+) binding site. Substrate is bound at residue Thr125–Asp127. Asp127 (proton acceptor) is an active-site residue. Arg154 provides a ligand contact to ADP. Residues Arg162 and Met169–Arg171 each bind substrate. Residues Gly185–Asp187, Lys211, and Lys213–His215 contribute to the ADP site. Substrate is bound by residues Glu222, Arg244, and His250 to Arg253.

It belongs to the phosphofructokinase type A (PFKA) family. ATP-dependent PFK group I subfamily. Prokaryotic clade 'B1' sub-subfamily. As to quaternary structure, homotetramer. It depends on Mg(2+) as a cofactor.

The protein resides in the cytoplasm. The catalysed reaction is beta-D-fructose 6-phosphate + ATP = beta-D-fructose 1,6-bisphosphate + ADP + H(+). Its pathway is carbohydrate degradation; glycolysis; D-glyceraldehyde 3-phosphate and glycerone phosphate from D-glucose: step 3/4. With respect to regulation, allosterically activated by ADP and other diphosphonucleosides, and allosterically inhibited by phosphoenolpyruvate. Catalyzes the phosphorylation of D-fructose 6-phosphate to fructose 1,6-bisphosphate by ATP, the first committing step of glycolysis. This is ATP-dependent 6-phosphofructokinase from Streptococcus suis (strain 05ZYH33).